Consider the following 675-residue polypeptide: UvrABC system protein B (675 aa).

Positions 32–417 (EGLSDGLAYQ…EHAGQVVEQV (386 aa)) constitute a Helicase ATP-binding domain. 45–52 (GVTGSGKT) provides a ligand contact to ATP. The Beta-hairpin motif lies at 98–121 (YYDYYQPEAYVPSRDLFIEKDSAI). Residues 436 to 602 (QVDDLMSEIN…QIKKQVKDII (167 aa)) enclose the Helicase C-terminal domain. The region spanning 634–669 (IKEIAKLEKAMQQAARDLQFEEAAVLRDRISNIKEN) is the UVR domain.

Belongs to the UvrB family. In terms of assembly, forms a heterotetramer with UvrA during the search for lesions. Interacts with UvrC in an incision complex.

Its subcellular location is the cytoplasm. Functionally, the UvrABC repair system catalyzes the recognition and processing of DNA lesions. A damage recognition complex composed of 2 UvrA and 2 UvrB subunits scans DNA for abnormalities. Upon binding of the UvrA(2)B(2) complex to a putative damaged site, the DNA wraps around one UvrB monomer. DNA wrap is dependent on ATP binding by UvrB and probably causes local melting of the DNA helix, facilitating insertion of UvrB beta-hairpin between the DNA strands. Then UvrB probes one DNA strand for the presence of a lesion. If a lesion is found the UvrA subunits dissociate and the UvrB-DNA preincision complex is formed. This complex is subsequently bound by UvrC and the second UvrB is released. If no lesion is found, the DNA wraps around the other UvrB subunit that will check the other stand for damage. The chain is UvrABC system protein B from Neisseria gonorrhoeae (strain ATCC 700825 / FA 1090).